We begin with the raw amino-acid sequence, 478 residues long: Methylenetetrahydrofolate--tRNA-(uracil-5-)-methyltransferase TrmFO (478 aa).

FAD is bound at residue 16 to 21 (GAGLAG). The tract at residues 429 to 448 (PLANPPTKGPDGKRLRGPEK) is disordered. Over residues 438-448 (PDGKRLRGPEK) the composition is skewed to basic and acidic residues.

The protein belongs to the MnmG family. TrmFO subfamily. The cofactor is FAD.

The protein resides in the cytoplasm. It carries out the reaction uridine(54) in tRNA + (6R)-5,10-methylene-5,6,7,8-tetrahydrofolate + NADH + H(+) = 5-methyluridine(54) in tRNA + (6S)-5,6,7,8-tetrahydrofolate + NAD(+). The enzyme catalyses uridine(54) in tRNA + (6R)-5,10-methylene-5,6,7,8-tetrahydrofolate + NADPH + H(+) = 5-methyluridine(54) in tRNA + (6S)-5,6,7,8-tetrahydrofolate + NADP(+). Functionally, catalyzes the folate-dependent formation of 5-methyl-uridine at position 54 (M-5-U54) in all tRNAs. This Rhodopseudomonas palustris (strain ATCC BAA-98 / CGA009) protein is Methylenetetrahydrofolate--tRNA-(uracil-5-)-methyltransferase TrmFO.